The primary structure comprises 932 residues: Isoleucine--tRNA ligase (932 aa).

A 'HIGH' region motif is present at residues 57 to 67 (PYANGDIHIGT). An L-isoleucyl-5'-AMP-binding site is contributed by E559. The 'KMSKS' region motif lies at 600-604 (KMSKS). K603 serves as a coordination point for ATP. The Zn(2+) site is built by C899, C902, C919, and C922.

It belongs to the class-I aminoacyl-tRNA synthetase family. IleS type 1 subfamily. As to quaternary structure, monomer. Zn(2+) is required as a cofactor.

Its subcellular location is the cytoplasm. The enzyme catalyses tRNA(Ile) + L-isoleucine + ATP = L-isoleucyl-tRNA(Ile) + AMP + diphosphate. In terms of biological role, catalyzes the attachment of isoleucine to tRNA(Ile). As IleRS can inadvertently accommodate and process structurally similar amino acids such as valine, to avoid such errors it has two additional distinct tRNA(Ile)-dependent editing activities. One activity is designated as 'pretransfer' editing and involves the hydrolysis of activated Val-AMP. The other activity is designated 'posttransfer' editing and involves deacylation of mischarged Val-tRNA(Ile). The sequence is that of Isoleucine--tRNA ligase from Thermoanaerobacter pseudethanolicus (strain ATCC 33223 / 39E) (Clostridium thermohydrosulfuricum).